The following is a 428-amino-acid chain: tRNA(Ile2) 2-agmatinylcytidine synthetase TiaS (428 aa).

Belongs to the TiaS family.

It is found in the cytoplasm. The enzyme catalyses cytidine(34) in tRNA(Ile2) + agmatine + ATP + H2O = 2-agmatinylcytidine(34) in tRNA(Ile2) + AMP + 2 phosphate + 2 H(+). Its function is as follows. ATP-dependent agmatine transferase that catalyzes the formation of 2-agmatinylcytidine (agm2C) at the wobble position (C34) of tRNA(Ile2), converting the codon specificity from AUG to AUA. The polypeptide is tRNA(Ile2) 2-agmatinylcytidine synthetase TiaS (Methanosarcina mazei (strain ATCC BAA-159 / DSM 3647 / Goe1 / Go1 / JCM 11833 / OCM 88) (Methanosarcina frisia)).